The following is a 160-amino-acid chain: Lipoprotein signal peptidase (160 aa).

The next 3 membrane-spanning stretches (helical) occupy residues 13–33 (IYIT…RLII), 72–92 (WFLS…ITKL), and 104–124 (SLII…GFVV). Catalysis depends on residues Asp-125 and Asp-143. A helical transmembrane segment spans residues 134-154 (WHFATFNIADCSIFIGIIILM).

Belongs to the peptidase A8 family.

Its subcellular location is the cell inner membrane. It catalyses the reaction Release of signal peptides from bacterial membrane prolipoproteins. Hydrolyzes -Xaa-Yaa-Zaa-|-(S,diacylglyceryl)Cys-, in which Xaa is hydrophobic (preferably Leu), and Yaa (Ala or Ser) and Zaa (Gly or Ala) have small, neutral side chains.. Its pathway is protein modification; lipoprotein biosynthesis (signal peptide cleavage). Functionally, this protein specifically catalyzes the removal of signal peptides from prolipoproteins. The polypeptide is Lipoprotein signal peptidase (Buchnera aphidicola subsp. Acyrthosiphon pisum (strain APS) (Acyrthosiphon pisum symbiotic bacterium)).